Reading from the N-terminus, the 586-residue chain is Arginine--tRNA ligase (586 aa).

A 'HIGH' region motif is present at residues 130–140; sequence ANPTGPMHVGH.

It belongs to the class-I aminoacyl-tRNA synthetase family. In terms of assembly, monomer.

Its subcellular location is the cytoplasm. It catalyses the reaction tRNA(Arg) + L-arginine + ATP = L-arginyl-tRNA(Arg) + AMP + diphosphate. This Methylobacterium sp. (strain 4-46) protein is Arginine--tRNA ligase.